The primary structure comprises 295 residues: MALPEFSMRQLLEAGAHFGHQTHRWNPKMDKYIFGARSNIHIIDLSQSIPLLHQALVKVREVAAGGGRILFVGTKRQASEPIATAAKRCAQYYVNHRWLGGTLTNWRTVSNSIARLRELESVLGGEGQGRSKKELLQLTRERDKLELSLGGIKDMGGIPDLMFVIDTNKEAIAIQEARKLNIPVIAILDTNCNPDGITYPIPGNDDAARAIQLYCDLMADAILDGLAAGQAASGVDLGASEAPVEPTLARELAPEAPAPEAPAEEAPAAEAAPAAEAAPAAEAAPAEASSEEQAG.

The tract at residues 242 to 295 is disordered; that stretch reads APVEPTLARELAPEAPAPEAPAEEAPAAEAAPAAEAAPAAEAAPAEASSEEQAG. Low complexity predominate over residues 264-288; the sequence is EEAPAAEAAPAAEAAPAAEAAPAEA.

Belongs to the universal ribosomal protein uS2 family.

The polypeptide is Small ribosomal subunit protein uS2 (Phenylobacterium zucineum (strain HLK1)).